A 410-amino-acid polypeptide reads, in one-letter code: Multifunctional CCA protein (410 aa).

ATP-binding residues include Gly-8 and Arg-11. CTP contacts are provided by Gly-8 and Arg-11. 2 residues coordinate Mg(2+): Asp-21 and Asp-23. Arg-91, Arg-143, and Arg-146 together coordinate ATP. Positions 91, 143, and 146 each coordinate CTP. Residues 232–333 enclose the HD domain; it reads TGVHVMMVVD…VRLLERSDAI (102 aa).

This sequence belongs to the tRNA nucleotidyltransferase/poly(A) polymerase family. Bacterial CCA-adding enzyme type 1 subfamily. Monomer. Can also form homodimers and oligomers. It depends on Mg(2+) as a cofactor. Requires Ni(2+) as cofactor.

It carries out the reaction a tRNA precursor + 2 CTP + ATP = a tRNA with a 3' CCA end + 3 diphosphate. The enzyme catalyses a tRNA with a 3' CCA end + 2 CTP + ATP = a tRNA with a 3' CCACCA end + 3 diphosphate. Functionally, catalyzes the addition and repair of the essential 3'-terminal CCA sequence in tRNAs without using a nucleic acid template. Adds these three nucleotides in the order of C, C, and A to the tRNA nucleotide-73, using CTP and ATP as substrates and producing inorganic pyrophosphate. tRNA 3'-terminal CCA addition is required both for tRNA processing and repair. Also involved in tRNA surveillance by mediating tandem CCA addition to generate a CCACCA at the 3' terminus of unstable tRNAs. While stable tRNAs receive only 3'-terminal CCA, unstable tRNAs are marked with CCACCA and rapidly degraded. The chain is Multifunctional CCA protein from Paraburkholderia phytofirmans (strain DSM 17436 / LMG 22146 / PsJN) (Burkholderia phytofirmans).